The following is a 132-amino-acid chain: Histone H2A.1 (132 aa).

A disordered region spans residues 1–21 (MSGGKGKAGTSEKASTSRSAK). Serine 2 carries the N-acetylserine modification. N6-acetyllysine is present on residues lysine 5 and lysine 7. Glutamine 105 is modified (N5-methylglutamine). Residue serine 129 is modified to Phosphoserine. The [ST]-Q motif motif lies at 129–130 (SQ).

The protein belongs to the histone H2A family. In terms of assembly, the nucleosome is a histone octamer containing two molecules each of H2A, H2B, H3 and H4 assembled in one H3-H4 heterotetramer and two H2A-H2B heterodimers. The octamer wraps approximately 147 bp of DNA. Phosphorylated to form H2AS128ph (gamma-H2A) in response to DNA double-strand breaks (DSBs) generated by exogenous genotoxic agents and by stalled replication forks. Phosphorylation is dependent on the DNA damage checkpoint kinases MEC1/ATR and TEL1/ATM, spreads on either side of a detected DSB site and may mark the surrounding chromatin for recruitment of proteins required for DNA damage signaling and repair. Gamma-H2A is removed from the DNA prior to the strand invasion-primer extension step of the repair process and subsequently dephosphorylated. Dephosphorylation is necessary for efficient recovery from the DNA damage checkpoint. In terms of processing, acetylated by ESA1 to form H2AK4ac and H2AK7ac.

It localises to the nucleus. It is found in the chromosome. Its function is as follows. Core component of nucleosome which plays a central role in DNA double strand break (DSB) repair. Nucleosomes wrap and compact DNA into chromatin, limiting DNA accessibility to the cellular machineries which require DNA as a template. Histones thereby play a central role in transcription regulation, DNA repair, DNA replication and chromosomal stability. DNA accessibility is regulated via a complex set of post-translational modifications of histones, also called histone code, and nucleosome remodeling. This Candida albicans (strain SC5314 / ATCC MYA-2876) (Yeast) protein is Histone H2A.1 (HTA1).